A 159-amino-acid polypeptide reads, in one-letter code: Aspartate carbamoyltransferase regulatory chain (159 aa).

Zn(2+) contacts are provided by cysteine 108, cysteine 113, cysteine 138, and cysteine 141.

Belongs to the PyrI family. As to quaternary structure, contains catalytic and regulatory chains. Zn(2+) serves as cofactor.

Its function is as follows. Involved in allosteric regulation of aspartate carbamoyltransferase. This is Aspartate carbamoyltransferase regulatory chain from Thermofilum pendens (strain DSM 2475 / Hrk 5).